Reading from the N-terminus, the 617-residue chain is Arrestin domain-containing protein B (617 aa).

The region spanning 1 to 109 (MDNRGLRLFI…ATFGQTDKWL (109 aa)) is the C2 domain. Positions 20, 27, 76, 78, and 84 each coordinate Ca(2+).

The protein belongs to the arrestin family. The cofactor is Ca(2+).

This Dictyostelium discoideum (Social amoeba) protein is Arrestin domain-containing protein B (adcB).